The following is a 164-amino-acid chain: Anterior gradient protein 3 (164 aa).

Residues 1 to 19 (MYFPMIELTLVLLASSNLA) form the signal peptide. The Prevents secretion from ER motif lies at 161-164 (QTEL).

The protein belongs to the AGR family.

It localises to the endoplasmic reticulum. The protein localises to the cytoplasm. In terms of biological role, required for calcium-mediated regulation of ciliary beat frequency in the airway. This Xenopus tropicalis (Western clawed frog) protein is Anterior gradient protein 3.